The sequence spans 313 residues: Protoheme IX farnesyltransferase (313 aa).

Transmembrane regions (helical) follow at residues 35-55, 56-76, 98-118, 120-140, 153-173, 180-200, 226-246, 248-268, and 292-312; these read LVVF…HPVL, AATS…LNMW, VSSP…VATL, VLVN…YAVV, IVIG…AATG, IILF…LALF, ILLY…LGYF, AAYG…AFNV, and LFLL…AAMI.

It belongs to the UbiA prenyltransferase family. Protoheme IX farnesyltransferase subfamily.

It localises to the cell inner membrane. It carries out the reaction heme b + (2E,6E)-farnesyl diphosphate + H2O = Fe(II)-heme o + diphosphate. It participates in porphyrin-containing compound metabolism; heme O biosynthesis; heme O from protoheme: step 1/1. Functionally, converts heme B (protoheme IX) to heme O by substitution of the vinyl group on carbon 2 of heme B porphyrin ring with a hydroxyethyl farnesyl side group. This chain is Protoheme IX farnesyltransferase, found in Afipia carboxidovorans (strain ATCC 49405 / DSM 1227 / KCTC 32145 / OM5) (Oligotropha carboxidovorans).